Here is a 337-residue protein sequence, read N- to C-terminus: Vacuolar protein sorting-associated protein 26B-A (337 aa).

Residues 313–337 are disordered; the sequence is RFEGTSHPETRPQHSGAAAVEQEHE.

This sequence belongs to the VPS26 family. As to quaternary structure, component of the heterotrimeric retromer cargo-selective complex (CSC) which is believed to associate with variable sorting nexins to form functionally distinct retromer complex variants.

It is found in the cytoplasm. It localises to the endosome membrane. The protein resides in the early endosome. Functionally, acts as a component of the retromer cargo-selective complex (CSC). The CSC is believed to be the core functional component of retromer or respective retromer complex variants acting to prevent missorting of selected transmembrane cargo proteins into the lysosomal degradation pathway. Retromer mediates retrograde transport of cargo proteins from endosomes to the trans-Golgi network (TGN). This Xenopus laevis (African clawed frog) protein is Vacuolar protein sorting-associated protein 26B-A (vps26b-a).